We begin with the raw amino-acid sequence, 262 residues long: Triosephosphate isomerase (262 aa).

13-15 (NWK) is a substrate binding site. His-103 acts as the Electrophile in catalysis. Catalysis depends on Glu-175, which acts as the Proton acceptor. Substrate-binding positions include Gly-181, Ser-221, and 242-243 (GG).

It belongs to the triosephosphate isomerase family. As to quaternary structure, homodimer.

It localises to the cytoplasm. The catalysed reaction is D-glyceraldehyde 3-phosphate = dihydroxyacetone phosphate. It participates in carbohydrate biosynthesis; gluconeogenesis. Its pathway is carbohydrate degradation; glycolysis; D-glyceraldehyde 3-phosphate from glycerone phosphate: step 1/1. Functionally, involved in the gluconeogenesis. Catalyzes stereospecifically the conversion of dihydroxyacetone phosphate (DHAP) to D-glyceraldehyde-3-phosphate (G3P). The sequence is that of Triosephosphate isomerase from Corynebacterium efficiens (strain DSM 44549 / YS-314 / AJ 12310 / JCM 11189 / NBRC 100395).